The following is a 70-amino-acid chain: Exodeoxyribonuclease 7 small subunit (70 aa).

This sequence belongs to the XseB family. In terms of assembly, heterooligomer composed of large and small subunits.

The protein resides in the cytoplasm. It carries out the reaction Exonucleolytic cleavage in either 5'- to 3'- or 3'- to 5'-direction to yield nucleoside 5'-phosphates.. In terms of biological role, bidirectionally degrades single-stranded DNA into large acid-insoluble oligonucleotides, which are then degraded further into small acid-soluble oligonucleotides. This Streptococcus pneumoniae serotype 2 (strain D39 / NCTC 7466) protein is Exodeoxyribonuclease 7 small subunit.